A 129-amino-acid chain; its full sequence is MLVSCAMRLHSGVFPDYAEKLPQEEKMEKEDSFPQRVWQIVAAIPEGYVTTYGDVAKLAGSPRAARQVGGVLKRLPEGSTLPWHRVVNRHGTISLTGPDLQRQRQALLAEGVMVSGSGQIDLQRYRWNY.

It belongs to the MGMT family. ATL subfamily. Interacts with HelD and UvrA.

Its function is as follows. Involved in DNA damage recognition. Binds DNA containing O(6)-methylguanine and larger O(6)-alkylguanine adducts, and to double-stranded DNA that contains an AP (apurinic/apyrimidinic) site. Binds to the damaged base and flips the base out of the DNA duplex into an extrahelical conformation, which allows processing by repair proteins. Works in partnership with the nucleotide excision repair (NER) pathway to enhance the repair of the O(6)-alkylguanine adducts larger than the methyl adduct. Also prevents methyl-directed mismatch repair (MMR)-mediated attack of the O(6)-alkylguanine:T mispairs for the larger alkyl groups. The polypeptide is DNA base-flipping protein (Escherichia coli (strain K12)).